The primary structure comprises 287 residues: MPLIFKIGYNVIPLQDVILPTPSSKVLKYLIQSGKLLPSLNNLITSRDKYKPIFISHLGLNQRRIFQTNGNLKTISRGSKLSSTIAFSTQVNVLPELDEGVFETIYGKFHITIESVEIVEVEKLKEEVEKHMNDNIRVRFISPTLLSSKVLLPPSLSERYKRVNAGYSTLPSVGLIVAYAYNVYCNLIGKKEVEVRAFKFGVISNALSRIIGYDLHPVTIVIGEDSKGNLRKARGVMGWIEFDIPDEKLKRRALRYLLASSYLGIGRSRGIGFGEIKLEFIKREENH.

This sequence belongs to the CRISPR-associated endoribonuclease Cas6 family. As to quaternary structure, part of the aCascade ribonucleoprotein complex, minimally composed of Csa2 and Cas5a, which binds crRNA. Other possible components of aCascade in strain P1 are Cas6b (SSO1437) and Csa5 (SSO1443), while SSO1399, Cas5b (SSO1400) and SSO1401 have sometimes been seen weakly associated. Csa2 is probably the major RNA-binding subunit. The Csa2-Cas5a-crRNA complex also binds target DNA homologous to crRNA, probably forming an R-loop. Purified aCascade forms a filament about 6 nm in width.

Functionally, CRISPR (clustered regularly interspaced short palindromic repeat) is an adaptive immune system that provides protection against mobile genetic elements (viruses, transposable elements and conjugative plasmids). CRISPR clusters contain spacers, sequences complementary to antecedent mobile elements, and target invading nucleic acids. CRISPR clusters are transcribed and processed into CRISPR RNA (crRNA). The polypeptide is CRISPR-associated endoribonuclease Cas6 1 (cas6a) (Saccharolobus solfataricus (strain ATCC 35092 / DSM 1617 / JCM 11322 / P2) (Sulfolobus solfataricus)).